The following is a 378-amino-acid chain: tRNA (guanine(26)-N(2))-dimethyltransferase (378 aa).

The Trm1 methyltransferase domain occupies 4–374 (KEVTEGKVRI…KGYEEIIRCV (371 aa)). R44, R69, D87, D114, and A115 together coordinate S-adenosyl-L-methionine. C246, C249, C263, and C266 together coordinate Zn(2+).

The protein belongs to the class I-like SAM-binding methyltransferase superfamily. Trm1 family.

The catalysed reaction is guanosine(26) in tRNA + 2 S-adenosyl-L-methionine = N(2)-dimethylguanosine(26) in tRNA + 2 S-adenosyl-L-homocysteine + 2 H(+). Dimethylates a single guanine residue at position 26 of a number of tRNAs using S-adenosyl-L-methionine as donor of the methyl groups. This Saccharolobus islandicus (strain M.16.27) (Sulfolobus islandicus) protein is tRNA (guanine(26)-N(2))-dimethyltransferase.